A 465-amino-acid chain; its full sequence is Cysteine--tRNA ligase (465 aa).

Cys-28 provides a ligand contact to Zn(2+). Residues 30–40 carry the 'HIGH' region motif; the sequence is MTVYDYCHLGH. Zn(2+)-binding residues include Cys-209, His-234, and Glu-238. A 'KMSKS' region motif is present at residues 266–270; that stretch reads KMSKS. Lys-269 is a binding site for ATP.

It belongs to the class-I aminoacyl-tRNA synthetase family. Monomer. The cofactor is Zn(2+).

The protein localises to the cytoplasm. The catalysed reaction is tRNA(Cys) + L-cysteine + ATP = L-cysteinyl-tRNA(Cys) + AMP + diphosphate. The protein is Cysteine--tRNA ligase of Methylococcus capsulatus (strain ATCC 33009 / NCIMB 11132 / Bath).